The following is a 36-amino-acid chain: Cytochrome b6-f complex subunit 7 (36 aa).

At 1-5 (NAAAE) the chain is on the lumenal side. A helical transmembrane segment spans residues 6–28 (IFRIAAVMNGLTLVGVAIGFVLL). Residues 29–36 (RIEATVEE) are Stromal-facing.

Belongs to the PetM family. The 4 large subunits of the cytochrome b6-f complex are cytochrome b6, subunit IV (17 kDa polypeptide, PetD), cytochrome f and the Rieske protein, while the 4 small subunits are PetG, PetL, PetM and PetN. The complex functions as a dimer.

The protein localises to the plastid. It is found in the chloroplast thylakoid membrane. In terms of biological role, component of the cytochrome b6-f complex, which mediates electron transfer between photosystem II (PSII) and photosystem I (PSI), cyclic electron flow around PSI, and state transitions. The chain is Cytochrome b6-f complex subunit 7 from Spinacia oleracea (Spinach).